Consider the following 158-residue polypeptide: UPF0225 protein Pfl01_1218 (158 aa).

The protein belongs to the UPF0225 family.

This chain is UPF0225 protein Pfl01_1218, found in Pseudomonas fluorescens (strain Pf0-1).